Consider the following 396-residue polypeptide: Small ribosomal subunit protein mS27 (396 aa).

It belongs to the mitochondrion-specific ribosomal protein mS27 family. Component of the mitochondrial small ribosomal subunit (mt-SSU). Mature N.crassa 74S mitochondrial ribosomes consist of a small (37S) and a large (54S) subunit. The 37S small subunit contains a 16S ribosomal RNA (16S mt-rRNA) and 32 different proteins. The 54S large subunit contains a 23S rRNA (23S mt-rRNA) and 42 different proteins.

The protein localises to the mitochondrion. Component of the mitochondrial ribosome (mitoribosome), a dedicated translation machinery responsible for the synthesis of mitochondrial genome-encoded proteins, including at least some of the essential transmembrane subunits of the mitochondrial respiratory chain. The mitoribosomes are attached to the mitochondrial inner membrane and translation products are cotranslationally integrated into the membrane. The sequence is that of Small ribosomal subunit protein mS27 (mrp13) from Neurospora crassa (strain ATCC 24698 / 74-OR23-1A / CBS 708.71 / DSM 1257 / FGSC 987).